A 172-amino-acid polypeptide reads, in one-letter code: Adenine phosphoribosyltransferase (172 aa).

This sequence belongs to the purine/pyrimidine phosphoribosyltransferase family. Homodimer.

The protein resides in the cytoplasm. The enzyme catalyses AMP + diphosphate = 5-phospho-alpha-D-ribose 1-diphosphate + adenine. It participates in purine metabolism; AMP biosynthesis via salvage pathway; AMP from adenine: step 1/1. In terms of biological role, catalyzes a salvage reaction resulting in the formation of AMP, that is energically less costly than de novo synthesis. The protein is Adenine phosphoribosyltransferase of Staphylococcus haemolyticus (strain JCSC1435).